Reading from the N-terminus, the 433-residue chain is Serine hydroxymethyltransferase (433 aa).

121 to 123 (AHV) is a binding site for (6S)-5,6,7,8-tetrahydrofolate. K227 bears the N6-(pyridoxal phosphate)lysine mark. A (6S)-5,6,7,8-tetrahydrofolate-binding site is contributed by E243.

The protein belongs to the SHMT family. Homodimer. Requires pyridoxal 5'-phosphate as cofactor.

The protein resides in the cytoplasm. It participates in amino-acid biosynthesis; glycine biosynthesis; glycine from L-serine: step 1/1. Its function is as follows. Catalyzes the reversible interconversion of serine and glycine with a modified folate serving as the one-carbon carrier. Also exhibits a pteridine-independent aldolase activity toward beta-hydroxyamino acids, producing glycine and aldehydes, via a retro-aldol mechanism. The chain is Serine hydroxymethyltransferase from Saccharolobus islandicus (strain M.14.25 / Kamchatka #1) (Sulfolobus islandicus).